Consider the following 85-residue polypeptide: Defensin-like protein 11 (85 aa).

The signal sequence occupies residues 1-29 (MGKTISFSAIILVFLLVSTGLMKQGDAQA). 4 cysteine pairs are disulfide-bonded: Cys-32–Cys-84, Cys-44–Cys-68, Cys-54–Cys-75, and Cys-58–Cys-77.

The protein belongs to the DEFL family.

It is found in the secreted. This is Defensin-like protein 11 from Arabidopsis thaliana (Mouse-ear cress).